The following is a 200-amino-acid chain: Ribonuclease HII (200 aa).

The RNase H type-2 domain maps to 10-200 (LIEAGCDEAG…LGDGQLNLNF (191 aa)). A divalent metal cation-binding residues include aspartate 16, glutamate 17, and aspartate 108.

The protein belongs to the RNase HII family. Mn(2+) serves as cofactor. The cofactor is Mg(2+).

It localises to the cytoplasm. It carries out the reaction Endonucleolytic cleavage to 5'-phosphomonoester.. In terms of biological role, endonuclease that specifically degrades the RNA of RNA-DNA hybrids. This chain is Ribonuclease HII, found in Bacteroides thetaiotaomicron (strain ATCC 29148 / DSM 2079 / JCM 5827 / CCUG 10774 / NCTC 10582 / VPI-5482 / E50).